Reading from the N-terminus, the 420-residue chain is Putative RNA-binding protein Alsin2 (420 aa).

A coiled-coil region spans residues 99 to 130 (IADCDRRTDSAKQRLKETQEELTAEVAEKANA). Basic and acidic residues-rich tracts occupy residues 242–259 (AELK…EGRG), 282–363 (RERQ…RFGD), and 373–399 (HHRD…HFRD). Residues 242-420 (AELKRTGKMT…SYSRERNYRR (179 aa)) form a disordered region.

It belongs to the Luc7 family. In terms of assembly, interacts with x16 (via Arg/Ser-rich region).

Its function is as follows. May bind to RNA via its Arg/Ser-rich domain. This chain is Putative RNA-binding protein Alsin2, found in Drosophila melanogaster (Fruit fly).